The sequence spans 346 residues: Serine/threonine-protein phosphatase PP1(4.8) (346 aa).

Positions 46–65 (QSAQTQESTPKTNGTGRATT) are disordered. Residues Asp-102, His-104, Asp-130, and Asn-162 each coordinate Mn(2+). His-163 functions as the Proton donor in the catalytic mechanism. The Mn(2+) site is built by His-211 and His-287.

Belongs to the PPP phosphatase family. PP-1 subfamily. It depends on Mn(2+) as a cofactor.

The enzyme catalyses O-phospho-L-seryl-[protein] + H2O = L-seryl-[protein] + phosphate. It catalyses the reaction O-phospho-L-threonyl-[protein] + H2O = L-threonyl-[protein] + phosphate. The polypeptide is Serine/threonine-protein phosphatase PP1(4.8) (Trypanosoma brucei brucei).